Consider the following 365-residue polypeptide: Formamidopyrimidine-DNA glycosylase (365 aa).

Residue Pro-2 is the Schiff-base intermediate with DNA of the active site. The active-site Proton donor is Glu-3. Lys-61 serves as the catalytic Proton donor; for beta-elimination activity. Residues Arg-121 to Ser-150 form a disordered region. The segment covering Thr-134–Ser-150 has biased composition (polar residues). His-186, Arg-205, and Arg-246 together coordinate DNA. The FPG-type zinc finger occupies Arg-331–Arg-365. Residue Arg-355 is the Proton donor; for delta-elimination activity of the active site.

This sequence belongs to the FPG family. Monomer. It depends on Zn(2+) as a cofactor.

It catalyses the reaction Hydrolysis of DNA containing ring-opened 7-methylguanine residues, releasing 2,6-diamino-4-hydroxy-5-(N-methyl)formamidopyrimidine.. The enzyme catalyses 2'-deoxyribonucleotide-(2'-deoxyribose 5'-phosphate)-2'-deoxyribonucleotide-DNA = a 3'-end 2'-deoxyribonucleotide-(2,3-dehydro-2,3-deoxyribose 5'-phosphate)-DNA + a 5'-end 5'-phospho-2'-deoxyribonucleoside-DNA + H(+). Functionally, involved in base excision repair of DNA damaged by oxidation or by mutagenic agents. Acts as a DNA glycosylase that recognizes and removes damaged bases. Has a preference for oxidized purines, such as 7,8-dihydro-8-oxoguanine (8-oxoG). Has AP (apurinic/apyrimidinic) lyase activity and introduces nicks in the DNA strand. Cleaves the DNA backbone by beta-delta elimination to generate a single-strand break at the site of the removed base with both 3'- and 5'-phosphates. This chain is Formamidopyrimidine-DNA glycosylase, found in Nitratidesulfovibrio vulgaris (strain ATCC 29579 / DSM 644 / CCUG 34227 / NCIMB 8303 / VKM B-1760 / Hildenborough) (Desulfovibrio vulgaris).